A 113-amino-acid chain; its full sequence is U11-theraphotoxin-Hhn1g (113 aa).

The N-terminal stretch at 1 to 21 (MNTVRVTFLLVFVLAVSLGQA) is a signal peptide. Residues 22 to 74 (DKDENRMEMQEKTEQGKSYLDFAENLLLQKLEELEAKLLEEDSEESRNSRQKR) constitute a propeptide that is removed on maturation. The tract at residues 61 to 83 (EEDSEESRNSRQKRCIGEGVPCD) is disordered. 3 disulfides stabilise this stretch: Cys75-Cys90, Cys82-Cys95, and Cys89-Cys110.

Belongs to the neurotoxin 14 (magi-1) family. 01 (HNTX-16) subfamily. As to expression, expressed by the venom gland.

The protein resides in the secreted. Probable ion channel inhibitor. This is U11-theraphotoxin-Hhn1g from Cyriopagopus hainanus (Chinese bird spider).